We begin with the raw amino-acid sequence, 334 residues long: Glucosyltransferase 3 (334 aa).

UDP-binding positions include Thr16, Arg179, and 249–254; that span reads SHKSAT.

Belongs to the Gtf3 glucosyltransferase family. In terms of assembly, homotetramer; a dimer of dimers.

Its pathway is protein modification; protein glycosylation. Its function is as follows. Required for polymorphic O-glycosylation of the serine-rich repeat protein in this bacteria. Catalyzes the second step in glycosylation by transferring glucose from UDP-glucose to the terminal GlcNAc moiety of the 3-O-(N-acetyl-alpha-D-glucosaminyl)-L-seryl-[protein] resulting from the first glycosylation step. Part of the accessory SecA2/SecY2 system specifically required to export GspB, a serine-rich repeat cell wall protein encoded upstream in the same operon. This Streptococcus gordonii protein is Glucosyltransferase 3.